Reading from the N-terminus, the 566-residue chain is Proline--tRNA ligase (566 aa).

Belongs to the class-II aminoacyl-tRNA synthetase family. ProS type 1 subfamily. As to quaternary structure, homodimer.

The protein localises to the cytoplasm. It carries out the reaction tRNA(Pro) + L-proline + ATP = L-prolyl-tRNA(Pro) + AMP + diphosphate. In terms of biological role, catalyzes the attachment of proline to tRNA(Pro) in a two-step reaction: proline is first activated by ATP to form Pro-AMP and then transferred to the acceptor end of tRNA(Pro). As ProRS can inadvertently accommodate and process non-cognate amino acids such as alanine and cysteine, to avoid such errors it has two additional distinct editing activities against alanine. One activity is designated as 'pretransfer' editing and involves the tRNA(Pro)-independent hydrolysis of activated Ala-AMP. The other activity is designated 'posttransfer' editing and involves deacylation of mischarged Ala-tRNA(Pro). The misacylated Cys-tRNA(Pro) is not edited by ProRS. The chain is Proline--tRNA ligase from Exiguobacterium sibiricum (strain DSM 17290 / CCUG 55495 / CIP 109462 / JCM 13490 / 255-15).